A 442-amino-acid polypeptide reads, in one-letter code: Signal recognition particle 54 kDa protein (442 aa).

GTP contacts are provided by residues 106–113, 186–190, and 244–247; these read GLQGSGKT, DTAGR, and TKLD.

It belongs to the GTP-binding SRP family. SRP54 subfamily. Part of the signal recognition particle protein translocation system, which is composed of SRP and FtsY. Archaeal SRP consists of a 7S RNA molecule of 300 nucleotides and two protein subunits: SRP54 and SRP19.

It localises to the cytoplasm. It carries out the reaction GTP + H2O = GDP + phosphate + H(+). Its function is as follows. Involved in targeting and insertion of nascent membrane proteins into the cytoplasmic membrane. Binds to the hydrophobic signal sequence of the ribosome-nascent chain (RNC) as it emerges from the ribosomes. The SRP-RNC complex is then targeted to the cytoplasmic membrane where it interacts with the SRP receptor FtsY. The sequence is that of Signal recognition particle 54 kDa protein from Methanothermobacter thermautotrophicus (strain ATCC 29096 / DSM 1053 / JCM 10044 / NBRC 100330 / Delta H) (Methanobacterium thermoautotrophicum).